The following is a 776-amino-acid chain: Kinesin-like protein KIN-8A (776 aa).

Disordered regions lie at residues 1–31 (MPVS…RGGA) and 80–135 (VGEV…KSSH). Positions 7–26 (ASAAGGQPWSSAAPAPASAP) are enriched in low complexity. The segment covering 123–132 (PPPPPAPPPK) has biased composition (pro residues). Residues 205–534 (RIMVFVRLRP…LHWADRAKEI (330 aa)) enclose the Kinesin motor domain. 297–304 (GATGAGKT) contacts ATP. The stretch at 554 to 592 (TDQAKLVLELQKENSELRQQLARQQQKLLTVQAQTLASN) forms a coiled coil. The interval 590–611 (ASNASPQQSPAPSAQISTPCST) is disordered. A compositionally biased stretch (low complexity) spans 593–604 (ASPQQSPAPSAQ). The stretch at 634–671 (AAENAQVRDLQRKVKAMEAEIEKMKKEHLLQLKQKDEF) forms a coiled coil.

It belongs to the TRAFAC class myosin-kinesin ATPase superfamily. Kinesin family. KIN-8 subfamily.

The chain is Kinesin-like protein KIN-8A from Oryza sativa subsp. japonica (Rice).